A 353-amino-acid polypeptide reads, in one-letter code: Photosystem II D2 protein (353 aa).

An N-acetylthreonine modification is found at Thr-2. Thr-2 is modified (phosphothreonine). A helical transmembrane segment spans residues 41 to 61 (CAYFALGGWFTGTTFVTSWYT). His-118 is a binding site for chlorophyll a. A helical membrane pass occupies residues 125 to 141 (GFMLRQFELARSVQLRP). Pheophytin a is bound by residues Gln-130 and Asn-143. A helical membrane pass occupies residues 153–166 (VFISVFFIYPLGQS). His-198 lines the chlorophyll a pocket. A helical transmembrane segment spans residues 208–228 (AALLCAIHGATVENTLFEDGD). A plastoquinone is bound by residues His-215 and Phe-262. Fe cation is bound at residue His-215. Fe cation is bound at residue His-269. A helical transmembrane segment spans residues 279 to 295 (GLWMSALGVVGLALNLR).

The protein belongs to the reaction center PufL/M/PsbA/D family. As to quaternary structure, PSII is composed of 1 copy each of membrane proteins PsbA, PsbB, PsbC, PsbD, PsbE, PsbF, PsbH, PsbI, PsbJ, PsbK, PsbL, PsbM, PsbT, PsbX, PsbY, PsbZ, Psb30/Ycf12, at least 3 peripheral proteins of the oxygen-evolving complex and a large number of cofactors. It forms dimeric complexes. The cofactor is The D1/D2 heterodimer binds P680, chlorophylls that are the primary electron donor of PSII, and subsequent electron acceptors. It shares a non-heme iron and each subunit binds pheophytin, quinone, additional chlorophylls, carotenoids and lipids. There is also a Cl(-1) ion associated with D1 and D2, which is required for oxygen evolution. The PSII complex binds additional chlorophylls, carotenoids and specific lipids..

Its subcellular location is the plastid membrane. The catalysed reaction is 2 a plastoquinone + 4 hnu + 2 H2O = 2 a plastoquinol + O2. In terms of biological role, photosystem II (PSII) is a light-driven water:plastoquinone oxidoreductase that uses light energy to abstract electrons from H(2)O, generating O(2) and a proton gradient subsequently used for ATP formation. It consists of a core antenna complex that captures photons, and an electron transfer chain that converts photonic excitation into a charge separation. The D1/D2 (PsbA/PsbD) reaction center heterodimer binds P680, the primary electron donor of PSII as well as several subsequent electron acceptors. D2 is needed for assembly of a stable PSII complex. The protein is Photosystem II D2 protein of Cuscuta reflexa (Southern Asian dodder).